We begin with the raw amino-acid sequence, 87 residues long: Serine protease inhibitor Kazal-type 12 (87 aa).

The N-terminal stretch at 1 to 22 (MKPAGAFLLLISLACLFLSVDA) is a signal peptide. Residues 26–87 (GGFQAFCSNY…KLGFKHEGKC (62 aa)) form the Kazal-like domain. 3 disulfides stabilise this stretch: Cys32–Cys68, Cys46–Cys65, and Cys54–Cys87.

In terms of tissue distribution, expressed in epydiymis, in the caput.

It is found in the secreted. Functionally, inhibits trypsin. This chain is Serine protease inhibitor Kazal-type 12 (Spink12), found in Mus musculus (Mouse).